The primary structure comprises 387 residues: Phosphoglycerate kinase (387 aa).

Substrate-binding positions include 21–23 (DLN), Arg36, 59–62 (HLGR), Arg113, and Arg146. ATP is bound by residues Lys197, Glu314, and 340 to 343 (GGDT).

The protein belongs to the phosphoglycerate kinase family. In terms of assembly, monomer.

It is found in the cytoplasm. The enzyme catalyses (2R)-3-phosphoglycerate + ATP = (2R)-3-phospho-glyceroyl phosphate + ADP. It participates in carbohydrate degradation; glycolysis; pyruvate from D-glyceraldehyde 3-phosphate: step 2/5. The sequence is that of Phosphoglycerate kinase from Pseudomonas aeruginosa (strain ATCC 15692 / DSM 22644 / CIP 104116 / JCM 14847 / LMG 12228 / 1C / PRS 101 / PAO1).